We begin with the raw amino-acid sequence, 63 residues long: Large ribosomal subunit protein eL24 (63 aa).

4 residues coordinate Zn(2+): Cys7, Cys10, Cys33, and Cys37. Residues Cys7–Cys37 form a C4-type zinc finger.

It belongs to the eukaryotic ribosomal protein eL24 family. As to quaternary structure, part of the 50S ribosomal subunit. Forms a cluster with proteins L3 and L14. Requires Zn(2+) as cofactor.

Binds to the 23S rRNA. The polypeptide is Large ribosomal subunit protein eL24 (Aeropyrum pernix (strain ATCC 700893 / DSM 11879 / JCM 9820 / NBRC 100138 / K1)).